The sequence spans 146 residues: Snaclec 4 (146 aa).

The first 23 residues, 1–23, serve as a signal peptide directing secretion; it reads MGRFISISFGLLVVFLSLSGTEA. 3 cysteine pairs are disulfide-bonded: cysteine 27-cysteine 38, cysteine 55-cysteine 144, and cysteine 121-cysteine 136. Residues 34–145 form the C-type lectin domain; the sequence is YDQNCYKVFT…CNFIAPVVCK (112 aa).

It belongs to the snaclec family. As to quaternary structure, heterodimer; disulfide-linked.

It is found in the secreted. Functionally, interferes with one step of hemostasis (modulation of platelet aggregation, or coagulation cascade, for example). This chain is Snaclec 4, found in Daboia siamensis (Eastern Russel's viper).